The following is a 691-amino-acid chain: Calcium-binding and coiled-coil domain-containing protein 1 (691 aa).

The tract at residues 1–30 is p300 KIX-binding; it reads MEESSLSRAPSRGGVNFLNVARTYIPNTKV. Residues 1-190 form an N-terminal AD (CTNNB1 binding site) region; the sequence is MEESSLSRAP…VQELEAALAT (190 aa). Ser-4 carries the post-translational modification Phosphoserine. Positions 45–125 are interaction with GATA1; the sequence is SDWIGIFKVE…FQFREPRPMD (81 aa). 3 coiled-coil regions span residues 145 to 205, 232 to 339, and 417 to 514; these read KATV…YKGL, ELED…AELE, and QSME…ADEK. Residues 501-691 are C-terminal AD (CTNNB1 binding site); interaction with CCAR1; that stretch reads RKLEARLEKV…FSTQDPFTFE (191 aa). Residues 512–605 form a disordered region; sequence DEKWTEDAAT…DSEAEDEKSV (94 aa). The segment at 653–679 adopts a UBZ1-type zinc-finger fold; that stretch reads WKECPICKERFPAESDKDALEGHMDGH. Positions 656, 659, 675, and 679 each coordinate Zn(2+).

Belongs to the CALCOCO family. In terms of assembly, part of a calphoglin complex consisting of CALCOCO1, PPA1 and PGM. Interacts with the bHLH-PAS domains of GRIP1, AHR and ARNT. Interacts with CTNNB1 via both its N- and C-terminal regions. Interacts with EP300. Interacts with CCAR1 (via N-terminus) and GATA1. Expressed in all tissues examined except spleen, with high levels of expression in the heart and kidney.

The protein localises to the cytoplasm. It localises to the nucleus. Functions as a coactivator for aryl hydrocarbon and nuclear receptors (NR). Recruited to promoters through its contact with the N-terminal basic helix-loop-helix-Per-Arnt-Sim (PAS) domain of transcription factors or coactivators, such as NCOA2. During ER-activation acts synergistically in combination with other NCOA2-binding proteins, such as EP300, CREBBP and CARM1. Involved in the transcriptional activation of target genes in the Wnt/CTNNB1 pathway. Functions as a secondary coactivator in LEF1-mediated transcriptional activation via its interaction with CTNNB1. Coactivator function for nuclear receptors and LEF1/CTNNB1 involves differential utilization of two different activation regions. In association with CCAR1 enhances GATA1- and MED1-mediated transcriptional activation from the gamma-globin promoter during erythroid differentiation of K562 erythroleukemia cells. The chain is Calcium-binding and coiled-coil domain-containing protein 1 (Calcoco1) from Mus musculus (Mouse).